A 215-amino-acid polypeptide reads, in one-letter code: Vesicle-trafficking protein SEC22b (215 aa).

Over 1–194 the chain is Cytoplasmic; the sequence is MVLLTMIARV…KYLNMRSTYA (194 aa). In terms of domain architecture, Longin spans 6 to 119; sequence MIARVADGLP…YSFIEFDTFI (114 aa). An N6-acetyllysine modification is found at lysine 38. Residues 134–194 form the v-SNARE coiled-coil homology domain; sequence NLGSINTELQ…KYLNMRSTYA (61 aa). Serine 137 is modified (phosphoserine). Threonine 140 is modified (phosphothreonine). Residues serine 164, serine 168, serine 174, and serine 177 each carry the phosphoserine modification. A helical; Anchor for type IV membrane protein transmembrane segment spans residues 195 to 215; sequence KLAAVAVFFIMLIVYVRFWWL.

The protein belongs to the synaptobrevin family. Interacts with STX17. Component of two distinct SNARE complexes consisting of STX5, GOSR2/BOS1, BET1 and SEC22B or STX18, USE1L, BNIP1/SEC20L and SEC22B. YKT6 can probably replace SEC22B as subunit of either complex. Interacts with the COPII Sec23/24 complex composed of SEC23A and SEC24A; recruits SEC22B into COPII-coated vesicles to allow its transport from the endoplasmic reticulum to the Golgi. Interacts with BET1.

It localises to the endoplasmic reticulum membrane. Its subcellular location is the endoplasmic reticulum-Golgi intermediate compartment membrane. The protein resides in the golgi apparatus. It is found in the cis-Golgi network membrane. The protein localises to the trans-Golgi network membrane. It localises to the melanosome. Functionally, SNARE involved in targeting and fusion of ER-derived transport vesicles with the Golgi complex as well as Golgi-derived retrograde transport vesicles with the ER. This Cricetulus griseus (Chinese hamster) protein is Vesicle-trafficking protein SEC22b (Sec22b).